A 904-amino-acid polypeptide reads, in one-letter code: DNA replication licensing factor MCM2 (904 aa).

Low complexity predominate over residues 1-12 (MAESSESLSASS). Residues 1–166 (MAESSESLSA…ATEDGEEDEE (166 aa)) form a disordered region. Residue alanine 2 is modified to N-acetylalanine. The segment at 2–257 (AESSESLSAS…LPEAPAELLQ (256 aa)) is interaction with KAT7. 2 positions are modified to phosphoserine: serine 12 and serine 21. Residue threonine 25 is modified to Phosphothreonine. Serine 26, serine 27, and serine 32 each carry phosphoserine. Threonine 39 bears the Phosphothreonine mark. The residue at position 40 (serine 40) is a Phosphoserine; by CDC7. A Phosphoserine modification is found at serine 41. Serine 53 is modified (phosphoserine; by CDC7). Threonine 59 is modified (phosphothreonine). Positions 61-130 (GPMEEEEDGE…DREAGRGLGR (70 aa)) are interaction with DNJC9. The span at 62–73 (PMEEEEDGEELI) shows a compositional bias: acidic residues. The span at 76-85 (GMERDYRPIP) shows a compositional bias: basic and acidic residues. The segment covering 88–104 (DVYEAEGLALDDEDVEE) has biased composition (acidic residues). At serine 108 the chain carries Phosphoserine. The segment covering 111–125 (EAAERTMRQRDREAG) has biased composition (basic and acidic residues). Tyrosine 137 is modified (phosphotyrosine). Phosphoserine occurs at positions 139 and 140. Lysine 178 is covalently cross-linked (Glycyl lysine isopeptide (Lys-Gly) (interchain with G-Cter in SUMO2)). Lysine 216 bears the N6-acetyllysine mark. The C4-type zinc-finger motif lies at 329–355 (CSKCNFVLGPFCQSQNQEVKPGSCPEC). Phosphoserine is present on residues serine 381 and serine 484. The MCM domain occupies 473–680 (IGEKIFASIA…QDEMLARFVV (208 aa)). ADP contacts are provided by serine 530 and glutamine 531. The short motif at 655–658 (SRFD) is the Arginine finger element.

This sequence belongs to the MCM family. In terms of assembly, component of the MCM2-7 complex. The complex forms a toroidal hexameric ring with the proposed subunit order MCM2-MCM6-MCM4-MCM7-MCM3-MCM5. Component of the CMG helicase complex, a hexameric ring of related MCM2-7 subunits stabilized by CDC45 and the tetrameric GINS complex. Interacts with DBF4. Interacts with KAT7. May interact with MCM10. Component of the replisome complex composed of at least DONSON, MCM2, MCM7, PCNA and TICRR. Forms a co-chaperone complex with DNAJC9 and histone H3.3-H4 heterodimers. Within the complex, interacts (via N-terminus) with DNAJC9 (via C-terminus); the interaction is histone-dependent. Interacts with AGER/RAGE; the interaction is increased following DNA replication stress and stabilizes the MCM2-7 complex at replication forks. In terms of processing, phosphorylated on Ser-108 by ATR in proliferating cells. Ser-108 proliferation is increased by genotoxic agents. Ser-40 is mediated by the CDC7-DBF4 and CDC7-DBF4B complexes, while Ser-53 phosphorylation is only mediated by the CDC7-DBF4 complex. Phosphorylation by the CDC7-DBF4 complex during G1/S phase is required for the initiation of DNA replication. Acetylated by MCM3AP. Post-translationally, O-glycosylated (O-GlcNAcylated), in a cell cycle-dependent manner.

The protein localises to the nucleus. It localises to the chromosome. The catalysed reaction is ATP + H2O = ADP + phosphate + H(+). Its function is as follows. Acts as a component of the MCM2-7 complex (MCM complex) which is the replicative helicase essential for 'once per cell cycle' DNA replication initiation and elongation in eukaryotic cells. Core component of CDC45-MCM-GINS (CMG) helicase, the molecular machine that unwinds template DNA during replication, and around which the replisome is built. The active ATPase sites in the MCM2-7 ring are formed through the interaction surfaces of two neighboring subunits such that a critical structure of a conserved arginine finger motif is provided in trans relative to the ATP-binding site of the Walker A box of the adjacent subunit. The six ATPase active sites, however, are likely to contribute differentially to the complex helicase activity. Required for the entry in S phase and for cell division. Plays a role in terminally differentiated hair cells development of the cochlea and induces cells apoptosis. The sequence is that of DNA replication licensing factor MCM2 (Mcm2) from Mus musculus (Mouse).